The chain runs to 476 residues: Serine--tRNA ligase (476 aa).

Residue 280–282 coordinates L-serine; that stretch reads TAE. Residue 311–313 coordinates ATP; the sequence is RAE. Glu334 provides a ligand contact to L-serine. Residue 401 to 404 participates in ATP binding; it reads EISS. Ser436 provides a ligand contact to L-serine.

Belongs to the class-II aminoacyl-tRNA synthetase family. Type-1 seryl-tRNA synthetase subfamily. Homodimer. The tRNA molecule binds across the dimer.

The protein resides in the cytoplasm. It catalyses the reaction tRNA(Ser) + L-serine + ATP = L-seryl-tRNA(Ser) + AMP + diphosphate + H(+). The catalysed reaction is tRNA(Sec) + L-serine + ATP = L-seryl-tRNA(Sec) + AMP + diphosphate + H(+). The protein operates within aminoacyl-tRNA biosynthesis; selenocysteinyl-tRNA(Sec) biosynthesis; L-seryl-tRNA(Sec) from L-serine and tRNA(Sec): step 1/1. In terms of biological role, catalyzes the attachment of serine to tRNA(Ser). Is also able to aminoacylate tRNA(Sec) with serine, to form the misacylated tRNA L-seryl-tRNA(Sec), which will be further converted into selenocysteinyl-tRNA(Sec). In Rhodopseudomonas palustris (strain HaA2), this protein is Serine--tRNA ligase.